The following is a 312-amino-acid chain: Ribosomal RNA small subunit methyltransferase H (312 aa).

S-adenosyl-L-methionine-binding positions include 33–35 (GGH), Asp53, Phe80, Asp101, and Gln108.

This sequence belongs to the methyltransferase superfamily. RsmH family.

It is found in the cytoplasm. The enzyme catalyses cytidine(1402) in 16S rRNA + S-adenosyl-L-methionine = N(4)-methylcytidine(1402) in 16S rRNA + S-adenosyl-L-homocysteine + H(+). Functionally, specifically methylates the N4 position of cytidine in position 1402 (C1402) of 16S rRNA. This is Ribosomal RNA small subunit methyltransferase H from Desulfosudis oleivorans (strain DSM 6200 / JCM 39069 / Hxd3) (Desulfococcus oleovorans).